The sequence spans 217 residues: Insulin-like growth factor 2.S (217 aa).

The signal sequence occupies residues 1 to 56 (MEQLSCKHRSSSVEAEAQLCRQTESRSTQLPRMSVMRHLFLLSITFLVYTLDSAKA). A b region spans residues 57–83 (YRATETLCGGELVDTLQFVCGDRGFYF). Intrachain disulfides connect cysteine 64-cysteine 103, cysteine 76-cysteine 116, and cysteine 102-cysteine 107. The tract at residues 84-96 (STNNGRSNRRPNR) is c. The a stretch occupies residues 97-117 (GIVDVCCFKSCDLELLETYCA). The interval 118–123 (KPTKNE) is d. Residues 124–217 (RDVSTAPATA…LQQASEPSHN (94 aa)) constitute a propeptide, e peptide.

Belongs to the insulin family.

Its subcellular location is the secreted. Functionally, the insulin-like growth factors, isolated from plasma, are structurally and functionally related to insulin but have a much higher growth-promoting activity. Promotes anterior neural development. Acts as a ligand for integrin which is required for IGF2 signaling. This is Insulin-like growth factor 2.S from Xenopus laevis (African clawed frog).